The chain runs to 89 residues: Phosphocarrier protein HPr (89 aa).

In terms of domain architecture, HPr spans 1-88 (MLEHELIVTN…ELFENRFNED (88 aa)). H15 (pros-phosphohistidine intermediate) is an active-site residue. A Phosphoserine; by HPrK/P modification is found at S46.

This sequence belongs to the HPr family.

It localises to the cytoplasm. Its activity is regulated as follows. Phosphorylation on Ser-46 inhibits the phosphoryl transfer from enzyme I to HPr. General (non sugar-specific) component of the phosphoenolpyruvate-dependent sugar phosphotransferase system (sugar PTS). This major carbohydrate active-transport system catalyzes the phosphorylation of incoming sugar substrates concomitantly with their translocation across the cell membrane. The phosphoryl group from phosphoenolpyruvate (PEP) is transferred to the phosphoryl carrier protein HPr by enzyme I. Phospho-HPr then transfers it to the PTS EIIA domain. The chain is Phosphocarrier protein HPr (ptsH) from Xylella fastidiosa (strain 9a5c).